The following is a 497-amino-acid chain: ADP-dependent glucokinase (497 aa).

The N-terminal stretch at 1–22 is a signal peptide; that stretch reads MALWRGSAYAGFLALAVGCVFL. One can recognise an ADPK domain in the interval 52–497; the sequence is SPEGRLAAAW…LFYSEVHPHL (446 aa). Positions 297, 328, and 481 each coordinate Mg(2+). The Proton acceptor role is filled by aspartate 481.

Belongs to the ADP-dependent glucokinase family. In terms of assembly, monomer. Requires Mg(2+) as cofactor.

Its subcellular location is the secreted. It carries out the reaction D-glucose + ADP = D-glucose 6-phosphate + AMP + H(+). It participates in carbohydrate degradation; glycolysis. Catalyzes the phosphorylation of D-glucose to D-glucose 6-phosphate using ADP as the phosphate donor. GDP and CDP can replace ADP, but with reduced efficiency. This Bos taurus (Bovine) protein is ADP-dependent glucokinase (ADPGK).